We begin with the raw amino-acid sequence, 351 residues long: D-glucoside 3-dehydrogenase (351 aa).

Belongs to the Gfo/Idh/MocA family.

It catalyses the reaction a D-glucoside + NAD(+) = a 3-dehydro-D-glucoside + NADH + H(+). In terms of biological role, catalyzes the NADH-dependent reduction of the oxo group at C3 of 3-dehydro-D-glucosides leading to D-glucosides. Probably functions in a metabolic pathway that transforms D-gulosides to D-glucosides. Can use 3-dehydro-D-glucose, methyl alpha-3-dehydro-D-glucoside and methyl beta-3-dehydro-D-glucoside as substrates in vitro. However, the actual specific physiological substrates for this metabolic pathway are unknown. To a lesser extent, is also able to catalyze the reverse reactions, i.e. the NAD(+)-dependent oxidation of the hydroxyl group at C3 of D-glucosides leading to 3-dehydro-D-glucosides. Cannot act on UDP-glucose, UDP-N-acetyl-D-glucosamine, D-glucosamine, N-acetyl-D-glucosamine, or UDP-D-galactose. In Escherichia coli (strain K12), this protein is D-glucoside 3-dehydrogenase (ycjS).